The chain runs to 355 residues: UDP-3-O-acylglucosamine N-acyltransferase (355 aa).

Catalysis depends on His252, which acts as the Proton acceptor.

This sequence belongs to the transferase hexapeptide repeat family. LpxD subfamily. As to quaternary structure, homotrimer.

It catalyses the reaction a UDP-3-O-[(3R)-3-hydroxyacyl]-alpha-D-glucosamine + a (3R)-hydroxyacyl-[ACP] = a UDP-2-N,3-O-bis[(3R)-3-hydroxyacyl]-alpha-D-glucosamine + holo-[ACP] + H(+). Its pathway is bacterial outer membrane biogenesis; LPS lipid A biosynthesis. Catalyzes the N-acylation of UDP-3-O-acylglucosamine using 3-hydroxyacyl-ACP as the acyl donor. Is involved in the biosynthesis of lipid A, a phosphorylated glycolipid that anchors the lipopolysaccharide to the outer membrane of the cell. This is UDP-3-O-acylglucosamine N-acyltransferase from Polynucleobacter necessarius subsp. necessarius (strain STIR1).